A 43-amino-acid polypeptide reads, in one-letter code: Protein PsbN (43 aa).

The chain crosses the membrane as a helical span at residues 5-27 (TLVAISISGLLVSFTGYALYTAF).

Belongs to the PsbN family.

It is found in the plastid. Its subcellular location is the chloroplast thylakoid membrane. May play a role in photosystem I and II biogenesis. This is Protein PsbN from Houttuynia cordata (Chameleon plant).